We begin with the raw amino-acid sequence, 325 residues long: MKNIILEIEEKIYSDEDITFNEAITLFQSSYDKNLNNLLDAANRIRNKFNGNIVDLCSIMNAKSGRCSEDCKFCAQSEHYNTNIKKYNMINMSDALNLAKENKEHGINRFSLVTSGKALTSNDFEKALEIYKEINKRVNINLCASLGILSYNQLLQLKNVGVTMYHHNLETSREYYNKICTTHSYDERIETINNAKKAGLMVCSGGIIGMGETITDRIKLAFELKSLQIQSIPINILNPVKGTPLEYTKRLEQNDILKTIAIFRFINPKASIRLAGGRNLIDNFGKGCFRAGANATISGNYLTTSGNKINDDIEMIKSLGLSLDI.

In terms of domain architecture, Radical SAM core spans 49 to 278 (FNGNIVDLCS…KASIRLAGGR (230 aa)). [4Fe-4S] cluster contacts are provided by C67, C71, and C74. The [2Fe-2S] cluster site is built by S111, C143, C203, and R273.

It belongs to the radical SAM superfamily. Biotin synthase family. As to quaternary structure, homodimer. [4Fe-4S] cluster is required as a cofactor. The cofactor is [2Fe-2S] cluster.

The catalysed reaction is (4R,5S)-dethiobiotin + (sulfur carrier)-SH + 2 reduced [2Fe-2S]-[ferredoxin] + 2 S-adenosyl-L-methionine = (sulfur carrier)-H + biotin + 2 5'-deoxyadenosine + 2 L-methionine + 2 oxidized [2Fe-2S]-[ferredoxin]. It functions in the pathway cofactor biosynthesis; biotin biosynthesis; biotin from 7,8-diaminononanoate: step 2/2. In terms of biological role, catalyzes the conversion of dethiobiotin (DTB) to biotin by the insertion of a sulfur atom into dethiobiotin via a radical-based mechanism. This Clostridium tetani (strain Massachusetts / E88) protein is Biotin synthase.